The sequence spans 942 residues: Glutamyl aminopeptidase (942 aa).

The Cytoplasmic portion of the chain corresponds to 1–14 (MSTDSKRYCIKTKH). Residues 15-35 (VAIICAAVVAVGLIVGLSVGL) traverse the membrane as a helical; Signal-anchor for type II membrane protein segment. Over 36 to 942 (TRSCDSKDGG…RDTIRDWFFN (907 aa)) the chain is Extracellular. Positions 40–74 (DSKDGGQGTTQSPSHLPPTSSPPQDQGVCPASEDE) are disordered. Residues Asn110, Asn114, and Asn187 are each glycosylated (N-linked (GlcNAc...) asparagine). Residue Glu213 participates in substrate binding. Asn314 carries N-linked (GlcNAc...) asparagine glycosylation. Residue 347–351 (GAMEN) coordinates substrate. Asn367 carries an N-linked (GlcNAc...) asparagine glycan. Position 383 (His383) interacts with Zn(2+). The active-site Proton acceptor is Glu384. Zn(2+)-binding residues include His387 and Glu406. Residues Asn557, Asn579, Asn587, Asn597, Asn632, Asn668, Asn753, Asn786, and Asn791 are each glycosylated (N-linked (GlcNAc...) asparagine). Arg877 serves as a coordination point for substrate.

It belongs to the peptidase M1 family. In terms of assembly, homodimer; disulfide-linked. Zn(2+) serves as cofactor.

It is found in the cell membrane. It carries out the reaction Release of N-terminal glutamate (and to a lesser extent aspartate) from a peptide.. With respect to regulation, substrate specificity is modulated by calcium which enhances the enzymatic activity for cleavage of acidic residues while reducing its activity with basic residues. Inhibited by aminopeptidase inhibitors amastatin and bestatin. Functionally, regulates central hypertension through its calcium-modulated preference to cleave N-terminal acidic residues from peptides such as angiotensin II. The sequence is that of Glutamyl aminopeptidase (ENPEP) from Sus scrofa (Pig).